A 373-amino-acid polypeptide reads, in one-letter code: Beta sliding clamp (373 aa).

Belongs to the beta sliding clamp family. As to quaternary structure, forms a ring-shaped head-to-tail homodimer around DNA which binds and tethers DNA polymerases and other proteins to the DNA. The DNA replisome complex has a single clamp-loading complex (3 tau and 1 each of delta, delta', psi and chi subunits) which binds 3 Pol III cores (1 core on the leading strand and 2 on the lagging strand) each with a beta sliding clamp dimer. Additional proteins in the replisome are other copies of gamma, psi and chi, Ssb, DNA helicase and RNA primase.

Its subcellular location is the cytoplasm. Functionally, confers DNA tethering and processivity to DNA polymerases and other proteins. Acts as a clamp, forming a ring around DNA (a reaction catalyzed by the clamp-loading complex) which diffuses in an ATP-independent manner freely and bidirectionally along dsDNA. Initially characterized for its ability to contact the catalytic subunit of DNA polymerase III (Pol III), a complex, multichain enzyme responsible for most of the replicative synthesis in bacteria; Pol III exhibits 3'-5' exonuclease proofreading activity. The beta chain is required for initiation of replication as well as for processivity of DNA replication. This chain is Beta sliding clamp (dnaN), found in Mycoplasmopsis pulmonis (strain UAB CTIP) (Mycoplasma pulmonis).